The chain runs to 847 residues: FAST kinase domain-containing protein 1, mitochondrial (847 aa).

K360 bears the N6-acetyllysine mark. An RAP domain is found at I777–E837.

The protein belongs to the FAST kinase family. Expression detected in spleen, thymus, testis, ovary, colon, heart, smooth muscle, kidney, brain, lung, liver and white adipose tissue with highest expression in heart.

The protein resides in the mitochondrion. Involved in the down-regulation of mitochondrial MT-ND3 mRNA levels which leads to decreased respiratory complex I abundance and activity. The chain is FAST kinase domain-containing protein 1, mitochondrial (FASTKD1) from Homo sapiens (Human).